A 318-amino-acid polypeptide reads, in one-letter code: MSFSSKVKNEVCRYDELEEKEAMALLSAIMRASGTLTFGRNKGIGFKIATENAAITRLVFKILKNILDIHTNIMIKKSNSFKKNNVYIIVINEEEGVKKLLEKTEVVKIEDIGFFINYNISENLVYDDNTKKAYIRGAFLGGGSVSNPEKTYHLEFVTNNEMYANKLSELINSYGLNSKVIQRKSNFIIYIKEGEQISDLLNIIGAHSSLLQLENIRIMKDMRNNINRIVNCETANLSKTVNAAVRQIESINLINKEIGLKRLPKNLRDMAEIRLKYPDVSLKELGEMLSPPVGKSGVNHRLRRIEKIAEELSKEGNF.

A DNA-binding region (H-T-H motif) is located at residues 281 to 314; sequence SLKELGEMLSPPVGKSGVNHRLRRIEKIAEELSK.

The protein belongs to the WhiA family.

In terms of biological role, involved in cell division and chromosome segregation. The protein is Probable cell division protein WhiA of Clostridium tetani (strain Massachusetts / E88).